A 383-amino-acid chain; its full sequence is tRNA(Met) cytidine acetate ligase (383 aa).

Residues 7–20 (ISEY…HLYQ), glycine 102, asparagine 160, and 181–182 (RI) each bind ATP.

Belongs to the TmcAL family.

It is found in the cytoplasm. It carries out the reaction cytidine(34) in elongator tRNA(Met) + acetate + ATP = N(4)-acetylcytidine(34) in elongator tRNA(Met) + AMP + diphosphate. Catalyzes the formation of N(4)-acetylcytidine (ac(4)C) at the wobble position of elongator tRNA(Met), using acetate and ATP as substrates. First activates an acetate ion to form acetyladenylate (Ac-AMP) and then transfers the acetyl group to tRNA to form ac(4)C34. The chain is tRNA(Met) cytidine acetate ligase from Exiguobacterium sibiricum (strain DSM 17290 / CCUG 55495 / CIP 109462 / JCM 13490 / 255-15).